A 467-amino-acid polypeptide reads, in one-letter code: Ethanolamine-phosphate phospho-lyase homolog 1 (467 aa).

N6-(pyridoxal phosphate)lysine is present on lysine 307.

Belongs to the class-III pyridoxal-phosphate-dependent aminotransferase family. It depends on pyridoxal 5'-phosphate as a cofactor.

The polypeptide is Ethanolamine-phosphate phospho-lyase homolog 1 (Caenorhabditis elegans).